The chain runs to 282 residues: Inositol oxygenase (282 aa).

Residues 1 to 25 (MKDPDPSQVYRPDMDPEAAKDKGSF) form a disordered region. Basic and acidic residues predominate over residues 12–24 (PDMDPEAAKDKGS). Residue Arg-26 participates in substrate binding. Ser-30 bears the Phosphoserine mark. Substrate is bound at residue 82 to 84 (DES). Fe cation is bound by residues His-95, His-120, and Asp-121. Substrate is bound by residues Lys-124 and 138–139 (GD). The Fe cation site is built by His-191, His-217, and Asp-250. 217–218 (HS) contacts substrate.

The protein belongs to the myo-inositol oxygenase family. The cofactor is Fe cation. In terms of processing, the N-terminus is blocked. As to expression, kidney specific.

The protein resides in the cytoplasm. It catalyses the reaction myo-inositol + O2 = D-glucuronate + H2O + H(+). It participates in polyol metabolism; myo-inositol degradation into D-glucuronate; D-glucuronate from myo-inositol: step 1/1. This Sus scrofa (Pig) protein is Inositol oxygenase (MIOX).